The following is a 402-amino-acid chain: LIM/homeobox protein Lhx5 (402 aa).

LIM zinc-binding domains are found at residues 3–61 and 62–125; these read VHCA…RRFG and TKCA…SSSL. Residues 124 to 135 are compositionally biased toward low complexity; that stretch reads SLKEGSLNSVSS. Disordered stretches follow at residues 124–186 and 298–402; these read SLKE…PRTT and HGPP…AAVW. Over residues 151-167 the composition is skewed to basic and acidic residues; that stretch reads DDPKETDNSTSSDKETA. A DNA-binding region (homeobox) is located at residues 180–239; sequence RRGPRTTIKAKQLETLKAAFAATPKPTRHIREQLAQETGLNMRVIQVWFQNRRSKERRMK. 2 stretches are compositionally biased toward low complexity: residues 300-311 and 322-336; these read PPSQAQSPADSS and PLGALEPPLAGPHAA.

Expressed in fetal brain and in various regions of the adult central nervous system including the spinal cord, the thalamus, and the cerebellum.

Its subcellular location is the nucleus. Its function is as follows. Plays an essential role in the regulation of neuronal differentiation and migration during development of the central nervous system. The polypeptide is LIM/homeobox protein Lhx5 (LHX5) (Homo sapiens (Human)).